The chain runs to 223 residues: Chorismate dehydratase (223 aa).

The protein belongs to the MqnA/MqnD family. MqnA subfamily.

It carries out the reaction chorismate = 3-[(1-carboxyvinyl)-oxy]benzoate + H2O. It functions in the pathway quinol/quinone metabolism; menaquinone biosynthesis. Its function is as follows. Catalyzes the dehydration of chorismate into 3-[(1-carboxyvinyl)oxy]benzoate, a step in the biosynthesis of menaquinone (MK, vitamin K2). In Campylobacter jejuni subsp. jejuni serotype O:23/36 (strain 81-176), this protein is Chorismate dehydratase.